A 219-amino-acid polypeptide reads, in one-letter code: MEYLSNLDPSSLLRSVSNMSADLGRKVWTSAPPRQRPFRVCDNKRTTRKGLTAATRQELLDKALEALVLSGALTLVLEEDGTTVESEEFFQLLEDDTCLMVLELGQSWSPRRSGVLSYGLGQEKPKHSKDIARITFDVYKQSPRDLFGSLNIKATFYGLYSLSCDIQGLGPKKILRELLRWASSLLQGLGHMLLGISSTLRRAVEGTERWQRQGRLKPY.

The region spanning 33–110 (PRQRPFRVCD…VLELGQSWSP (78 aa)) is the CIDE-N domain.

It belongs to the CIDE family. As to quaternary structure, interacts with DFFA. Interacts with DFFB; inhibited by DFFB. Interacts with APOB. Interacts with PREB/SEC12; facilitating loading of SCAP-SREBP into COPII vesicles.

It is found in the lipid droplet. The protein localises to the endoplasmic reticulum membrane. It localises to the golgi apparatus. Its subcellular location is the cytoplasmic vesicle. The protein resides in the COPI-coated vesicle. Functionally, lipid transferase specifically expressed in hepatocytes, which promotes unilocular lipid droplet formation by mediating lipid droplet fusion. Lipid droplet fusion promotes their enlargement, restricting lipolysis and favoring lipid storage. Localizes on the lipid droplet surface, at focal contact sites between lipid droplets, and mediates atypical lipid droplet fusion by promoting directional net neutral lipid transfer from the smaller to larger lipid droplets. The transfer direction may be driven by the internal pressure difference between the contacting lipid droplet pair. Promotes lipid exchange and lipid droplet fusion in both small and large lipid droplet-containing hepatocytes. In addition to its role in lipid droplet fusion, also involved in cytoplasmic vesicle biogenesis and transport. Required for very-low-density lipoprotein (VLDL) lipidation and maturation. Probably involved in the biogenesis of VLDL transport vesicles by forming a COPII vesicle coat and facilitating the formation of endoplasmic reticulum-derived large vesicles. Also involved in sterol-regulated export of the SCAP-SREBP complex, composed of SCAP, SREBF1/SREBP1 and SREBF2/SREBP2, by promoting loading of SCAP-SREBP into COPII vesicles. May also activate apoptosis. This is Lipid transferase CIDEB (CIDEB) from Bos taurus (Bovine).